The chain runs to 142 residues: MSLMKNERAIIMSMWEKMAAQAEPIGTETLERLFCSYPQTKTYFPHFDLHHGSQQLRAHGFKIMTAVGDAVKSIDNLSSALTKLSELHAYILRVDPVNFKLLSHCLLVTMAARFPADFTPEVHEAWDKFMSILSSILTEKYR.

An N-acetylserine modification is found at Ser2. Residues 2 to 142 (SLMKNERAII…LSSILTEKYR (141 aa)) enclose the Globin domain. Thr29 is modified (phosphothreonine). Ser53 bears the Phosphoserine mark. His59 serves as a coordination point for heme b. A Phosphoserine modification is found at Ser73. Residue His88 participates in heme b binding.

The protein belongs to the globin family. As to quaternary structure, heterotetramer of two zeta chains and beta-type chains.

Functionally, the zeta chain is an alpha-type chain of mammalian embryonic hemoglobin. In Mus musculus (Mouse), this protein is Hemoglobin subunit zeta (Hbz).